The chain runs to 510 residues: UDP-N-acetylmuramoylalanine--D-glutamate ligase (510 aa).

Glycine 138–threonine 144 contributes to the ATP binding site. The segment at phenylalanine 294–arginine 316 is disordered.

It belongs to the MurCDEF family.

Its subcellular location is the cytoplasm. It catalyses the reaction UDP-N-acetyl-alpha-D-muramoyl-L-alanine + D-glutamate + ATP = UDP-N-acetyl-alpha-D-muramoyl-L-alanyl-D-glutamate + ADP + phosphate + H(+). Its pathway is cell wall biogenesis; peptidoglycan biosynthesis. Cell wall formation. Catalyzes the addition of glutamate to the nucleotide precursor UDP-N-acetylmuramoyl-L-alanine (UMA). The protein is UDP-N-acetylmuramoylalanine--D-glutamate ligase of Bordetella pertussis (strain Tohama I / ATCC BAA-589 / NCTC 13251).